We begin with the raw amino-acid sequence, 141 residues long: Hemoglobin subunit alpha (141 aa).

Positions 1–141 constitute a Globin domain; it reads VLSPDDKKHV…VSTVLTSKYR (141 aa). A Phosphoserine modification is found at Ser3. N6-succinyllysine is present on residues Lys7 and Lys11. N6-acetyllysine; alternate is present on Lys16. At Lys16 the chain carries N6-succinyllysine; alternate. Residue Tyr24 is modified to Phosphotyrosine. Phosphoserine is present on Ser35. N6-succinyllysine is present on Lys40. Phosphoserine is present on Ser49. His58 lines the O2 pocket. His87 lines the heme b pocket. The residue at position 102 (Ser102) is a Phosphoserine. Position 108 is a phosphothreonine (Thr108). Phosphoserine is present on residues Ser124 and Ser131. Phosphothreonine is present on residues Thr134 and Thr137. At Ser138 the chain carries Phosphoserine.

Belongs to the globin family. In terms of assembly, heterotetramer of two alpha chains and two beta chains. Red blood cells.

Involved in oxygen transport from the lung to the various peripheral tissues. Its function is as follows. Hemopressin acts as an antagonist peptide of the cannabinoid receptor CNR1. Hemopressin-binding efficiently blocks cannabinoid receptor CNR1 and subsequent signaling. The chain is Hemoglobin subunit alpha (HBA) from Theropithecus gelada (Gelada baboon).